A 124-amino-acid polypeptide reads, in one-letter code: LOB domain-containing protein 9 (124 aa).

The LOB domain maps to 11 to 113 (APCALCTTKN…IYLNELKEKI (103 aa)).

This sequence belongs to the LOB domain-containing protein family.

The chain is LOB domain-containing protein 9 (LBD9) from Arabidopsis thaliana (Mouse-ear cress).